The following is a 977-amino-acid chain: MKPSIAEMLHRGRMLWIILLSTIALGWTTPIPLIEDSEEIDEPCFDPCYCEVKESLFHIHCDSKGFTNISQITEFWSRPFKLYLQRNSMRKLYTNSFLHLNNAVSINLGNNALQDIQTGAFNGLKILKRLYLHENKLDVFRNDTFLGLESLEYLQADYNVIKRIESGAFRNLSKLRVLILNDNLIPMLPTNLFKAVSLTHLDLRGNRLKVLFYRGMLDHIGRSLMELQLEENPWNCTCEIVQLKSWLERIPYTALVGDITCETPFHFHGKDLREIRKTELCPLLSDSEVEASLGIPHSSSSKENAWPTKPSSMLSSVHFTASSVEYKSSNKQPKPTKQPRTPRPPSTSQALYPGPNQPPIAPYQTRPPIPIICPTGCTCNLHINDLGLTVNCKERGFNNISELLPRPLNAKKLYLSSNLIQKIYRSDFWNFSSLDLLHLGNNRISYVQDGAFINLPNLKSLFLNGNDIEKLTPGMFRGLQSLHYLYFEFNVIREIQPAAFSLMPNLKLLFLNNNLLRTLPTDAFAGTSLARLNLRKNYFLYLPVAGVLEHLNAIVQIDLNENPWDCTCDLVPFKQWIETISSVSVVGDVLCRSPENLTHRDVRTIELEVLCPEMLHVAPAGESPAQPGDSHLIGAPTSASPYEFSPPGGPVPLSVLILSLLVLFFSAVFVAAGLFAYVLRRRRKKLPFRSKRQEGVDLTGIQMQCHRLFEDGGGGGGGSGGGGRPTLSSPEKAPPVGHVYEYIPHPVTQMCNNPIYKPREEEEVAVSSAQEAGSAERGGPGTQPPGMGEALLGSEQFAETPKENHSNYRTLLEKEKEWALAVSSSQLNTIVTVNHHHPHHPAVGGVSGVVGGTGGDLAGFRHHEKNGGVVLFPPGGGCGSGSMLLDRERPQPAPCTVGFVDCLYGTVPKLKELHVHPPGMQYPDLQQDARLKETLLFSAGKGFTDHQTQKSDYLELRAKLQTKPDYLEVLEKTTYRF.

The N-terminal stretch at 1-26 is a signal peptide; that stretch reads MKPSIAEMLHRGRMLWIILLSTIALG. Residues 29–654 are Extracellular-facing; the sequence is TPIPLIEDSE…SPPGGPVPLS (626 aa). An N-linked (GlcNAc...) asparagine glycan is attached at N68. 6 LRR repeats span residues 78–99, 102–123, 126–147, 150–171, 174–195, and 197–218; these read RPFK…SFLH, NAVS…AFNG, ILKR…TFLG, SLEY…AFRN, KLRV…LFKA, and SLTH…GMLD. The LRRCT 1 domain maps to 232–283; that stretch reads NPWNCTCEIVQLKSWLERIPYTALVGDITCETPFHFHGKDLREIRKTELCPL. The tract at residues 325 to 360 is disordered; it reads EYKSSNKQPKPTKQPRTPRPPSTSQALYPGPNQPPI. Positions 364 to 406 constitute an LRRNT domain; sequence QTRPPIPIICPTGCTCNLHINDLGLTVNCKERGFNNISELLPR. LRR repeat units follow at residues 409–430, 433–454, 457–478, 481–502, 505–526, and 528–549; these read NAKK…DFWN, SLDL…AFIN, NLKS…MFRG, SLHY…AFSL, NLKL…AFAG, and SLAR…GVLE. Positions 562-613 constitute an LRRCT 2 domain; the sequence is NPWDCTCDLVPFKQWIETISSVSVVGDVLCRSPENLTHRDVRTIELEVLCPE. N596 is a glycosylation site (N-linked (GlcNAc...) asparagine). The chain crosses the membrane as a helical span at residues 655–675; sequence VLILSLLVLFFSAVFVAAGLF. Topologically, residues 676 to 977 are cytoplasmic; sequence AYVLRRRRKK…EVLEKTTYRF (302 aa). Disordered regions lie at residues 708 to 735 and 761 to 790; these read LFED…KAPP and EEEV…MGEA. A compositionally biased stretch (gly residues) spans 711–724; it reads DGGGGGGGSGGGGR. Residues 765–775 are compositionally biased toward low complexity; sequence AVSSAQEAGSA.

Belongs to the SLITRK family. In terms of tissue distribution, expressed in the occipital lobe of the cerebral cortex of the brain. Expressed at higher levels in some astrocytic brain tumors such as astrocytomas, oligodendrogliomas, glioblastomas, gangliogliomas and primitive neuroectodermal tumors.

Its subcellular location is the membrane. Suppresses neurite outgrowth. The chain is SLIT and NTRK-like protein 3 (SLITRK3) from Homo sapiens (Human).